We begin with the raw amino-acid sequence, 181 residues long: Capsid protein VP4 (181 aa).

It localises to the virion. In terms of biological role, VP4 self-assembles to form, together with capsid protein VP10, an icosahedral caspid of 87 nm in diameter, with a T=43 symmetry and composed of 420 hexamers and 12 pentamers. VP4 proteins arrange into hexons, while VP10 proteins form the pentameric densities located at the 5-fold axes in the virion. The stoichiometry of VP4:VP10 is 42:1. The polypeptide is Capsid protein VP4 (Sulfolobus (SPV1)).